The primary structure comprises 425 residues: Glutamate-1-semialdehyde 2,1-aminomutase (425 aa).

Lys-265 is modified (N6-(pyridoxal phosphate)lysine).

The protein belongs to the class-III pyridoxal-phosphate-dependent aminotransferase family. HemL subfamily. Homodimer. The cofactor is pyridoxal 5'-phosphate.

Its subcellular location is the cytoplasm. The enzyme catalyses (S)-4-amino-5-oxopentanoate = 5-aminolevulinate. Its pathway is porphyrin-containing compound metabolism; protoporphyrin-IX biosynthesis; 5-aminolevulinate from L-glutamyl-tRNA(Glu): step 2/2. The sequence is that of Glutamate-1-semialdehyde 2,1-aminomutase from Nitrosospira multiformis (strain ATCC 25196 / NCIMB 11849 / C 71).